We begin with the raw amino-acid sequence, 610 residues long: All-trans-retinol 13,14-reductase (610 aa).

Residues 1–18 (MWLPLVLLLAVLLLAVLC) form the signal peptide.

It belongs to the carotenoid/retinoid oxidoreductase family. CrtISO subfamily. Requires NAD(+) as cofactor. NADP(+) is required as a cofactor. FAD serves as cofactor. Expressed in liver; expression positively correlates with obesity and liver steatosis. Expressed in adipose tissue; expression tends to be decreased in obese versus lean individuals.

Its subcellular location is the endoplasmic reticulum membrane. It carries out the reaction all-trans-13,14-dihydroretinol + A = all-trans-retinol + AH2. Its function is as follows. Catalyzes the saturation of all-trans-retinol to all-trans-13,14-dihydroretinol. Does not exhibit any activity toward all-trans-retinoic acid, nor 9-cis, 11-cis or 13-cis-retinol isomers. May play a role in the metabolism of vitamin A. Independently of retinol conversion, may regulate liver metabolism upstream of MLXIPL/ChREBP. May play a role in adipocyte differentiation. In Homo sapiens (Human), this protein is All-trans-retinol 13,14-reductase (RETSAT).